The chain runs to 107 residues: Early E3A 12.5 kDa protein (107 aa).

It belongs to the adenoviridae E3A-2 family.

This is Early E3A 12.5 kDa protein from Homo sapiens (Human).